The sequence spans 64 residues: Conotoxin VnMLCL-042 (64 aa).

Positions methionine 1 to proline 19 are cleaved as a signal peptide. Residues asparagine 20–aspartate 43 constitute a propeptide that is removed on maturation. Methionine 63 is modified (methionine amide).

It belongs to the conotoxin T superfamily. In terms of tissue distribution, expressed by the venom duct.

Its subcellular location is the secreted. This Conus ventricosus (Mediterranean cone) protein is Conotoxin VnMLCL-042.